Consider the following 363-residue polypeptide: Homeobox protein DTH-2 (363 aa).

A DNA-binding region (homeobox) is located at residues 133 to 192 (RRKRRILFSQAQIYELERRFKQQKYLSAPEREHLANLINLTPTQVKIWFQNHRYKCKRSQ). Positions 189 to 246 (KRSQKDKEKEQQKEKSYHLKKNIVDDKERSPNKQICNASSSDRSTPEEPVAKAKESGL) are disordered. A compositionally biased stretch (basic and acidic residues) spans 191 to 219 (SQKDKEKEQQKEKSYHLKKNIVDDKERSP). The span at 220–231 (NKQICNASSSDR) shows a compositional bias: polar residues. A compositionally biased stretch (basic and acidic residues) spans 232 to 246 (STPEEPVAKAKESGL).

It belongs to the NK-2 homeobox family. Intestine and unidentified peripheral parenchymal cells. Slightly higher levels in the cephalic region compared to other body regions.

The protein resides in the nucleus. This protein might be involved in determination and/or differentiation of nerve cells in the continuous replacement of neurons in the cephalic region. The chain is Homeobox protein DTH-2 (DTH-2) from Girardia tigrina (Planarian).